The primary structure comprises 876 residues: MVVRDQDEALRNSYKYVKLYVRQDQLEDTVDILAKQDEDKSNNDDRRSLASILDSSSSVKKKGKGSNEKYLPCVSFNTVPRSRVSSPLDEEKREFPGVQISADYTMEEYYDDESGFTSDNNADYFSGNSYSSRREGSASPGRYSSPPPASKRNIKIGKMFKISENGKIVREDYPTTPTDINDALVISRAYANWRQLWIKKKNQIDHRLEQKRDFFNYPTILFPPNKKKSSEGATPTIKFNPPIEDGFTPLTKSQKRKERVLSEKVGFPNTPRTILCHISGRKHTWVALDWALRTLIQNTDHIVVLANLPRLTKNNFEDNDSMSERKRMLMMMDDSRSVSSARRSRSRSRSRSICTRRALSLGPEESDNKLKHQNFIEWTSGYTQNEIERKLQDLFDYVTLIIPQDRSVKVTVEILIGKTKKTLLEAINIYLPDFFVSSTLRWERTDSLVRWKSNFLTDKLCTNFPIPTFIVPAKRMFDLEIDLQKEFKEPEVTKQKNTSGPKPGFSHSKSADASIPTISNIKRKQDNDYSIDSLCYAPEANGANNSSREEASDDELNAFKDDENDVMSVKSLTSNISVKEKLCTMARKRRKSMAQQLNDADHDSSIPPGQRHLKKLNIILESSLKFSLEIDSITDSIENGDVDEKRAHSMESGFEELKRVITGGAPPRHVATPQRSMLDVLDNPSSSRSKSKSRSSSKSRIRDKSKPSSPTATDINSSASASRSRSPQIKFASSVKNVDGNAALGAIKSRHSLDSPGDQQQQHHHHHHRDTDQLSVPGLPHLAPSKSYSVSSGNKDSSLRKVSSSSSLRKVKSNDSNSGKRIKKPVVTSAHLKPSSGGGGLFSFFKSKSRSPSSFRKEDESKNTPKRGGLFGFGRL.

Residues 37-48 (DEDKSNNDDRRS) show a composition bias toward basic and acidic residues. Disordered regions lie at residues 37–67 (DEDK…KGSN), 112–155 (DESG…RNIK), 226–254 (KKKS…TKSQ), and 330–353 (MMMD…SRSI). Phosphoserine is present on residues Ser48 and Ser51. The segment covering 49-58 (LASILDSSSS) has biased composition (low complexity). The segment covering 115-131 (GFTSDNNADYFSGNSYS) has biased composition (polar residues). Residues Ser360, Ser510, Ser552, and Ser577 each carry the phosphoserine modification. The tract at residues 490-513 (PEVTKQKNTSGPKPGFSHSKSADA) is disordered. Disordered stretches follow at residues 661–728 (ITGG…RSPQ) and 750–876 (RHSL…FGRL). Residues 689–699 (SKSKSRSSSKS) show a composition bias toward basic residues. The span at 717–726 (SSASASRSRS) shows a compositional bias: low complexity. Residue Ser775 is modified to Phosphoserine. Low complexity-rich tracts occupy residues 794-808 (NKDS…SSSL) and 842-854 (FSFF…SPSS).

This is an uncharacterized protein from Saccharomyces cerevisiae (strain ATCC 204508 / S288c) (Baker's yeast).